Here is a 159-residue protein sequence, read N- to C-terminus: Ribosomal RNA large subunit methyltransferase H (159 aa).

S-adenosyl-L-methionine is bound by residues Leu-76, Gly-108, and 127–132; that span reads FGRLTL.

The protein belongs to the RNA methyltransferase RlmH family. In terms of assembly, homodimer.

The protein resides in the cytoplasm. It catalyses the reaction pseudouridine(1915) in 23S rRNA + S-adenosyl-L-methionine = N(3)-methylpseudouridine(1915) in 23S rRNA + S-adenosyl-L-homocysteine + H(+). Its function is as follows. Specifically methylates the pseudouridine at position 1915 (m3Psi1915) in 23S rRNA. The polypeptide is Ribosomal RNA large subunit methyltransferase H (Streptococcus pneumoniae (strain 70585)).